A 254-amino-acid chain; its full sequence is Peptide methionine sulfoxide reductase A5 (254 aa).

The N-terminal stretch at 1 to 33 (MAISLKRNRFFIPYTNLVFFFFLCVSLLDKTVS) is a signal peptide.

Belongs to the MsrA Met sulfoxide reductase family.

It catalyses the reaction L-methionyl-[protein] + [thioredoxin]-disulfide + H2O = L-methionyl-(S)-S-oxide-[protein] + [thioredoxin]-dithiol. The catalysed reaction is [thioredoxin]-disulfide + L-methionine + H2O = L-methionine (S)-S-oxide + [thioredoxin]-dithiol. Catalyzes the reduction of methionine sulfoxide (MetSO) to methionine in proteins. Plays a protective role against oxidative stress by restoring activity to proteins that have been inactivated by methionine oxidation. MSRA family specifically reduces the MetSO S-enantiomer. In Arabidopsis thaliana (Mouse-ear cress), this protein is Peptide methionine sulfoxide reductase A5 (MSRA5).